The sequence spans 472 residues: Uronate isomerase (472 aa).

This sequence belongs to the metallo-dependent hydrolases superfamily. Uronate isomerase family.

The enzyme catalyses D-glucuronate = D-fructuronate. The catalysed reaction is aldehydo-D-galacturonate = keto-D-tagaturonate. It participates in carbohydrate metabolism; pentose and glucuronate interconversion. This is Uronate isomerase from Nostoc punctiforme (strain ATCC 29133 / PCC 73102).